Here is a 235-residue protein sequence, read N- to C-terminus: Protein mxl-3 (235 aa).

Residues 18 to 49 (EKQFRKRHHSDSSDDDSSSPKSASPSMDDDRR) are disordered. The interval 47–60 (DRRAHHNELERRRR) is basic motif. The 52-residue stretch at 47-98 (DRRAHHNELERRRRDHIKDHFTILKDAIPLLDGEKSSRALILKRAVEFIHVM) folds into the bHLH domain. A helix-loop-helix motif region spans residues 61-98 (DHIKDHFTILKDAIPLLDGEKSSRALILKRAVEFIHVM).

It belongs to the MAX family. In terms of assembly, may form homodimer. Interacts (via N-terminus) with skn-1 isoforms a and c. Expressed in the intestine and in the AWC sensory neurons.

Its subcellular location is the nucleus. It localises to the cytoplasm. Functionally, transcription factor which regulates the expression of genes involved in lipid metabolism in response to nutrient availability. Binds to the E-box motif 5'-CACGTG-3'. Under well-fed conditions, binds to the promoter and represses the expression of lipase genes lipl-1, lipl-2, lipl-3 and to a lesser extent lipl-5, thereby preventing lipolysis. In response to a high-glucose diet, promotes fatty acid synthesis, elongation and desaturation by up-regulating transcription factor sbp-1 expression. Under well-fed conditions, acts remotely in the intestine to up-regulate the expression of chemoreceptor srh-234 gene in the ADL sensory neuron, possibly by regulating the insulin signaling pathway. The protein is Protein mxl-3 of Caenorhabditis elegans.